The chain runs to 292 residues: Ventral anterior homeobox 2 (292 aa).

A compositionally biased stretch (basic and acidic residues) spans 1–36 (MGDGGAERDRGPKRREEPGGRSGCRGEHRGAEDLRA). Residues 1 to 74 (MGDGGAERDR…DGQQALGETD (74 aa)) are disordered. A compositionally biased stretch (polar residues) spans 38–55 (TGSTSPREIAGTSASSPA). A DNA-binding region (homeobox) is located at residues 102–161 (PKRTRTSFTAEQLYRLEMEFQRCQYVVGRERTELARQLNLSETQVKVWFQNRRTKQKKDQ). The disordered stretch occupies residues 212–241 (AGHRGTSLGDPRNSSQRLNPMPSASASSPL).

Belongs to the EMX homeobox family.

The protein resides in the nucleus. In terms of biological role, transcription factor that may function in dorsoventral specification of the forebrain. Regulates the expression of Wnt signaling antagonists including the expression of a truncated TCF7L2 isoform that cannot bind CTNNB1 and acts therefore as a potent dominant-negative Wnt antagonist. Plays a crucial role in eye development and, in particular, in the specification of the ventral optic vesicle. May be a regulator of axial polarization in the retina. This Rattus norvegicus (Rat) protein is Ventral anterior homeobox 2 (Vax2).